Here is a 1377-residue protein sequence, read N- to C-terminus: DNA-directed RNA polymerase subunit beta (1377 aa).

This sequence belongs to the RNA polymerase beta chain family. As to quaternary structure, the RNAP catalytic core consists of 2 alpha, 1 beta, 1 beta' and 1 omega subunit. When a sigma factor is associated with the core the holoenzyme is formed, which can initiate transcription.

The enzyme catalyses RNA(n) + a ribonucleoside 5'-triphosphate = RNA(n+1) + diphosphate. Functionally, DNA-dependent RNA polymerase catalyzes the transcription of DNA into RNA using the four ribonucleoside triphosphates as substrates. This chain is DNA-directed RNA polymerase subunit beta, found in Brucella canis (strain ATCC 23365 / NCTC 10854 / RM-666).